The following is a 356-amino-acid chain: Cyanide hydratase (356 aa).

Residues 6–285 enclose the CN hydrolase domain; sequence YKAAAVTSEP…DGLLFVDIDL (280 aa). E46 acts as the Proton acceptor in catalysis. K128 is a catalytic residue. C163 functions as the Nucleophile in the catalytic mechanism.

The protein belongs to the carbon-nitrogen hydrolase superfamily. Nitrilase family. In terms of assembly, oligomer of dimers, forming left-handed helical fibers.

It carries out the reaction formamide = hydrogen cyanide + H2O. In terms of biological role, catalyzes the hydration of cyanide to formamide. Degradation of cyanide may be important for plant pathogenic fungi in infection of cyanogenic plants. The polypeptide is Cyanide hydratase (Leptosphaeria maculans (Blackleg fungus)).